Here is a 1257-residue protein sequence, read N- to C-terminus: LIM domain kinase 1 (1257 aa).

Residues 1 to 24 (MHHQQRLRANGGRGGTGLGAGSGP) are disordered. An interaction with LATS1 region spans residues 1-147 (MHHQQRLRAN…ERSKLYCGQC (147 aa)). The segment covering 11-24 (GGRGGTGLGAGSGP) has biased composition (gly residues). LIM zinc-binding domains are found at residues 31 to 93 (PLCA…RFGD) and 94 to 154 (ACQQ…RSCQ). The 101-residue stretch at 174–274 (LVEIPKDATP…MLQLTVEHDP (101 aa)) folds into the PDZ domain. The Protein kinase domain maps to 401–686 (LVIGEKLGEG…PCFETLHVWL (286 aa)). Residues 407-415 (LGEGFFGKV) and lysine 430 each bind ATP. The active site involves aspartate 522. Disordered stretches follow at residues 552 to 587 (LPSG…RQRR), 759 to 811 (QDIP…ERAL), and 881 to 900 (EELL…QHHR). Over residues 794–811 (QEERRNLTPDTESKERAL) the composition is skewed to basic and acidic residues. At serine 1000 the chain carries Phosphoserine. 3 disordered regions span residues 1010–1037 (AKQL…NPPL), 1085–1182 (SAQQ…EKVH), and 1212–1257 (AAGT…NTRC). Composition is skewed to polar residues over residues 1085 to 1095 (SAQQQRTSSNH) and 1113 to 1125 (RTGS…SNCV). 2 stretches are compositionally biased toward low complexity: residues 1126–1137 (SPTRSSRPGSPT) and 1145–1166 (TAAT…HQQQ).

This sequence belongs to the protein kinase superfamily. TKL Ser/Thr protein kinase family. Interacts with LATS1, and this interaction inhibits phosphorylation of tsr/cofilin. Post-translationally, phosphorylated on serine and/or threonine residues by ROCK1. Phosphorylated by PAK4 resulting in increased LIMK1 ability to phosphorylate cofilin. May be dephosphorylated and inactivated by SSH1. In terms of tissue distribution, expressed throughout the imaginal disks of the eye, leg and wing.

It localises to the cytoplasm. The protein localises to the cleavage furrow. It is found in the midbody. It carries out the reaction L-seryl-[protein] + ATP = O-phospho-L-seryl-[protein] + ADP + H(+). It catalyses the reaction L-threonyl-[protein] + ATP = O-phospho-L-threonyl-[protein] + ADP + H(+). In terms of biological role, protein kinase which regulates actin filament dynamics. Phosphorylates and inactivates the actin binding/depolymerizing factor tsr/cofilin, thereby stabilizing the actin cytoskeleton. Modulation of actin cytoskeleton dynamics may be essential for imaginal disk morphogenesis and axon guidance. This chain is LIM domain kinase 1 (LIMK1), found in Drosophila melanogaster (Fruit fly).